The following is a 940-amino-acid chain: Isoleucine--tRNA ligase (940 aa).

The 'HIGH' region signature appears at 58–68 (PYANGDIHIGH). Glutamate 564 contributes to the L-isoleucyl-5'-AMP binding site. The short motif at 605-609 (KMSKS) is the 'KMSKS' region element. An ATP-binding site is contributed by lysine 608. Residues cysteine 903, cysteine 906, cysteine 923, and cysteine 926 each coordinate Zn(2+).

Belongs to the class-I aminoacyl-tRNA synthetase family. IleS type 1 subfamily. In terms of assembly, monomer. Zn(2+) serves as cofactor.

It is found in the cytoplasm. It catalyses the reaction tRNA(Ile) + L-isoleucine + ATP = L-isoleucyl-tRNA(Ile) + AMP + diphosphate. In terms of biological role, catalyzes the attachment of isoleucine to tRNA(Ile). As IleRS can inadvertently accommodate and process structurally similar amino acids such as valine, to avoid such errors it has two additional distinct tRNA(Ile)-dependent editing activities. One activity is designated as 'pretransfer' editing and involves the hydrolysis of activated Val-AMP. The other activity is designated 'posttransfer' editing and involves deacylation of mischarged Val-tRNA(Ile). The polypeptide is Isoleucine--tRNA ligase (Shewanella pealeana (strain ATCC 700345 / ANG-SQ1)).